The primary structure comprises 77 residues: Small ribosomal subunit protein bS18 (77 aa).

This sequence belongs to the bacterial ribosomal protein bS18 family. In terms of assembly, part of the 30S ribosomal subunit. Forms a tight heterodimer with protein bS6.

In terms of biological role, binds as a heterodimer with protein bS6 to the central domain of the 16S rRNA, where it helps stabilize the platform of the 30S subunit. This is Small ribosomal subunit protein bS18 from Bacillus thuringiensis subsp. konkukian (strain 97-27).